A 600-amino-acid polypeptide reads, in one-letter code: Glutamine--fructose-6-phosphate aminotransferase [isomerizing] (600 aa).

Cys2 acts as the Nucleophile; for GATase activity in catalysis. The region spanning 2-217 is the Glutamine amidotransferase type-2 domain; the sequence is CGIVGYIGQL…DKEMVIVTDD (216 aa). SIS domains follow at residues 283-422 and 452-590; these read IAAA…KNGI and IARE…VDKP. The For Fru-6P isomerization activity role is filled by Lys595.

As to quaternary structure, homodimer.

It localises to the cytoplasm. The catalysed reaction is D-fructose 6-phosphate + L-glutamine = D-glucosamine 6-phosphate + L-glutamate. In terms of biological role, catalyzes the first step in hexosamine metabolism, converting fructose-6P into glucosamine-6P using glutamine as a nitrogen source. The chain is Glutamine--fructose-6-phosphate aminotransferase [isomerizing] (glmS) from Bacillus spizizenii (strain ATCC 23059 / NRRL B-14472 / W23) (Bacillus subtilis subsp. spizizenii).